Here is a 436-residue protein sequence, read N- to C-terminus: Na(+)/H(+) antiporter NhaA 1 (436 aa).

11 consecutive transmembrane segments (helical) span residues 35 to 55, 80 to 100, 116 to 136, 147 to 167, 176 to 196, 201 to 221, 226 to 246, 283 to 303, 313 to 333, 354 to 374, and 385 to 405; these read FGGG…NSPW, LATW…GLEL, ALPV…YVGV, GWAI…AVIG, AFLL…IAIF, FKLT…LLVQ, WWWA…ESGV, VSAG…SLRG, PIVV…IFGS, LLGV…IGEL, and VKAA…IVLI.

It belongs to the NhaA Na(+)/H(+) (TC 2.A.33) antiporter family.

Its subcellular location is the cell membrane. It carries out the reaction Na(+)(in) + 2 H(+)(out) = Na(+)(out) + 2 H(+)(in). In terms of biological role, na(+)/H(+) antiporter that extrudes sodium in exchange for external protons. In Salinispora tropica (strain ATCC BAA-916 / DSM 44818 / JCM 13857 / NBRC 105044 / CNB-440), this protein is Na(+)/H(+) antiporter NhaA 1.